We begin with the raw amino-acid sequence, 972 residues long: Structural polyprotein (972 aa).

Asp-26 contacts a divalent metal cation. The 226-residue stretch at 509-734 (SGGPDGKFSR…YLGELMASNA (226 aa)) folds into the Peptidase S50 domain. Residue Ser-633 is the Nucleophile of the active site. Residue Lys-674 is part of the active site. 2 disordered regions span residues 794–817 (KLIS…AQEA) and 916–972 (NGGR…NAEV). Basic and acidic residues predominate over residues 801–817 (KHPEKPKGPDQHHAQEA). The span at 963–972 (FTPSGDNAEV) shows a compositional bias: polar residues.

In terms of assembly, homotrimer. A central divalent metal (possibly cobalt) stabilizes the VP2 trimer. As to quaternary structure, homodimer. interacts (via C-terminus) with VP1 in the cytoplasm. Interacts with VP2. Post-translationally, specific enzymatic cleavages yield mature proteins. The capsid assembly seems to be regulated by polyprotein processing. The protease VP4 cleaves itself off the polyprotein, thus releasing pre-VP2 and VP3 within the infected cell. During capsid assembly, the C-terminus of pre-VP2 is further processed by VP4, giving rise to VP2, the external capsid protein and three small peptides that all stay closely associated with the capsid.

Its subcellular location is the virion. It localises to the host cytoplasm. In terms of biological role, capsid protein VP2 self assembles to form an icosahedral capsid with a T=13 symmetry, about 70 nm in diameter, and consisting of 260 VP2 trimers. The capsid encapsulates the genomic dsRNA. VP2 is also involved in attachment and entry into the host cell. The precursor of VP2 plays an important role in capsid assembly. First, pre-VP2 and VP2 oligomers assemble to form a procapsid. Then, the pre-VP2 intermediates may be processed into VP2 proteins by proteolytic cleavage mediated by VP4 to obtain the mature virion. The final capsid is composed of pentamers and hexamers but VP2 has a natural tendency to assemble into all-pentameric structures. Therefore pre-VP2 may be required to allow formation of the hexameric structures. Functionally, protease VP4 is a serine protease that cleaves the polyprotein into its final products. Pre-VP2 is first partially cleaved, and may be completely processed by VP4 upon capsid maturation. Its function is as follows. Capsid protein VP3 plays a key role in virion assembly by providing a scaffold for the capsid made of VP2. May self-assemble to form a T=4-like icosahedral inner-capsid composed of at least 180 trimers. Plays a role in genomic RNA packaging by recruiting VP1 into the capsid and interacting with the dsRNA genome segments to form a ribonucleoprotein complex. Additionally, the interaction of the VP3 C-terminal tail with VP1 removes the inherent structural blockade of the polymerase active site. Thus, VP3 can also function as a transcriptional activator. In terms of biological role, structural peptide 1 is a small peptide derived from pre-VP2 C-terminus. It destabilizes and perforates cell membranes, suggesting a role during entry. Structural peptide 2 is a small peptide derived from pVP2 C-terminus. It is not essential for the virus viability, but viral growth is affected when missing. Functionally, structural peptide 3 is a small peptide derived from pVP2 C-terminus. It is not essential for the virus viability, but viral growth is affected when missing. This Infectious pancreatic necrosis virus (strain Sp) (IPNV) protein is Structural polyprotein.